Here is a 107-residue protein sequence, read N- to C-terminus: C-X-C motif chemokine 3 (107 aa).

The signal sequence occupies residues 1 to 34; sequence MAHATLSAAPSNPRLLRVALLLLLLVAASRRAAG. 2 disulfide bridges follow: Cys43–Cys69 and Cys45–Cys85.

It belongs to the intercrine alpha (chemokine CxC) family. In terms of processing, N-terminal processed form GRO-gamma(5-73) is produced by proteolytic cleavage after secretion from peripheral blood monocytes.

It is found in the secreted. Ligand for CXCR2. Has chemotactic activity for neutrophils. May play a role in inflammation and exert its effects on endothelial cells in an autocrine fashion. In vitro, the processed form GRO-gamma(5-73) shows a fivefold higher chemotactic activity for neutrophilic granulocytes. The sequence is that of C-X-C motif chemokine 3 (CXCL3) from Homo sapiens (Human).